Consider the following 110-residue polypeptide: DNA-binding protein Mhun_3016 (110 aa).

Belongs to the PDCD5 family.

This chain is DNA-binding protein Mhun_3016, found in Methanospirillum hungatei JF-1 (strain ATCC 27890 / DSM 864 / NBRC 100397 / JF-1).